A 117-amino-acid polypeptide reads, in one-letter code: MEDDFLFMTLLYDFYGALLTDKQREIFEMYYLNDYSLGEISEILDISRQGVYDALKRAEDSLEFYEEKLGLVKKHQEMMKKIEKIKECIKLIKEREKDEEILKIIEDMARELEELNP.

Belongs to the UPF0122 family.

Might take part in the signal recognition particle (SRP) pathway. This is inferred from the conservation of its genetic proximity to ftsY/ffh. May be a regulatory protein. The chain is UPF0122 protein TTE1463 from Caldanaerobacter subterraneus subsp. tengcongensis (strain DSM 15242 / JCM 11007 / NBRC 100824 / MB4) (Thermoanaerobacter tengcongensis).